Here is a 619-residue protein sequence, read N- to C-terminus: 1-deoxy-D-xylulose-5-phosphate synthase (619 aa).

Residues histidine 74 and glycine 115 to serine 117 contribute to the thiamine diphosphate site. Aspartate 146 serves as a coordination point for Mg(2+). Thiamine diphosphate contacts are provided by residues glycine 147–alanine 148, asparagine 175, and tyrosine 285. Asparagine 175 contacts Mg(2+). Residues glutamate 289–lysine 310 form a disordered region. Glutamate 365 lines the thiamine diphosphate pocket.

It belongs to the transketolase family. DXPS subfamily. Homodimer. The cofactor is Mg(2+). Thiamine diphosphate is required as a cofactor.

The enzyme catalyses D-glyceraldehyde 3-phosphate + pyruvate + H(+) = 1-deoxy-D-xylulose 5-phosphate + CO2. Its pathway is metabolic intermediate biosynthesis; 1-deoxy-D-xylulose 5-phosphate biosynthesis; 1-deoxy-D-xylulose 5-phosphate from D-glyceraldehyde 3-phosphate and pyruvate: step 1/1. Its function is as follows. Catalyzes the acyloin condensation reaction between C atoms 2 and 3 of pyruvate and glyceraldehyde 3-phosphate to yield 1-deoxy-D-xylulose-5-phosphate (DXP). The sequence is that of 1-deoxy-D-xylulose-5-phosphate synthase from Clostridium botulinum (strain Alaska E43 / Type E3).